Consider the following 731-residue polypeptide: Gelsolin (731 aa).

The actin-severing stretch occupies residues 2 to 125 (VVEHPEFLKA…YKKGGVASGF (124 aa)). A Gelsolin-like 1 repeat occupies 25–107 (FDLVPVPPNL…VQGFESATFL (83 aa)). Tyr35 carries the post-translational modification Phosphotyrosine. The Ca(2+) site is built by Gly41, Asp42, Glu73, Asp85, Gly90, and Ala92. Positions 72-75 (DESG) are actin-actin interfilament contact point. 111 to 118 (KSGLKYKK) contacts a 1,2-diacyl-sn-glycero-3-phospho-(1D-myo-inositol-4,5-bisphosphate). A Ca(2+)-binding site is contributed by Val121. An a 1,2-diacyl-sn-glycero-3-phospho-(1D-myo-inositol-4,5-bisphosphate)-binding site is contributed by 137–145 (RLFQVKGRR). One copy of the Gelsolin-like 2 repeat lies at 147–219 (VRATEVPVSW…SEEGAEPEAM (73 aa)). 2 residues coordinate Ca(2+): Gly162 and Asp163. A disulfide bridge connects residues Cys164 and Cys177. Residue Glu185 coordinates Ca(2+). The span at 197–211 (RDNERSGRARVHVSE) shows a compositional bias: basic and acidic residues. The disordered stretch occupies residues 197–216 (RDNERSGRARVHVSEEGAEP). Ca(2+) contacts are provided by Asp235, Glu278, Asp279, and Glu303. Residues 266 to 338 (DENPFAQGAL…LPEGGETPLF (73 aa)) form a Gelsolin-like 3 repeat. Phosphotyrosine is present on residues Tyr358 and Tyr414. The tract at residues 383–731 (AAQHGMDDDG…LDRALAELAA (349 aa)) is actin-binding, Ca-sensitive. One copy of the Gelsolin-like 4 repeat lies at 404–485 (SDKVPVDPAT…VQGKEPAHLM (82 aa)). Ca(2+) is bound by residues Gly420, Asp421, Glu451, Asp463, Gly468, Pro470, and Thr500. The stretch at 527–591 (AVEVMPKAGA…AEGSEPDSFW (65 aa)) is one Gelsolin-like 5 repeat. N6-acetyllysine is present on Lys533. Ca(2+) is bound by residues Asn540 and Asp541. Tyr552 carries the phosphotyrosine modification. Glu563 serves as a coordination point for Ca(2+). Tyr600 is subject to Phosphotyrosine. The Gelsolin-like 6 repeat unit spans residues 630-705 (IEEVPGELMQ…VKQGFEPPSF (76 aa)). The Ca(2+) site is built by Asp645, Asp646, and Glu668. Thr691 is modified (phosphothreonine).

It belongs to the villin/gelsolin family. Binds to actin and to fibronectin. Identified in a complex composed of ACTA1, COBL, GSN and TMSB4X. Interacts with the inactive form of EIF2AK2/PKR. Interacts with FLII.

It is found in the cytoplasm. The protein resides in the cytoskeleton. Calcium-regulated, actin-modulating protein that binds to the plus (or barbed) ends of actin monomers or filaments, preventing monomer exchange (end-blocking or capping). It can promote the assembly of monomers into filaments (nucleation) as well as sever filaments already formed. Plays a role in ciliogenesis. The chain is Gelsolin (GSN) from Bos taurus (Bovine).